A 158-amino-acid polypeptide reads, in one-letter code: uncharacterized protein (158 aa).

The protein resides in the mitochondrion. This is an uncharacterized protein from Arabidopsis thaliana (Mouse-ear cress).